The sequence spans 186 residues: LIM domain-containing protein DDB_G0271356 (186 aa).

3 LIM zinc-binding domains span residues 7-67, 68-127, and 128-186; these read PECY…DKFA, PKCQ…KIGF, and LCRH…KLYG.

This Dictyostelium discoideum (Social amoeba) protein is LIM domain-containing protein DDB_G0271356.